A 579-amino-acid polypeptide reads, in one-letter code: Protein downstream neighbor of son homolog (579 aa).

2 disordered regions span residues 1–68 (MAEL…RRNP) and 331–379 (FSQP…DESF). A compositionally biased stretch (basic and acidic residues) spans 339–348 (DTGKKQKKPE). A compositionally biased stretch (acidic residues) spans 365 to 378 (EADEASDESDEDES).

The protein belongs to the DONSON family. Component of the replisome complex.

Its subcellular location is the nucleus. In terms of biological role, replisome component that maintains genome stability by protecting stalled or damaged replication forks. After the induction of replication stress, required for the stabilization of stalled replication forks, the efficient activation of the intra-S-phase and G/2M cell-cycle checkpoints and the maintenance of genome stability. This chain is Protein downstream neighbor of son homolog, found in Xenopus laevis (African clawed frog).